We begin with the raw amino-acid sequence, 195 residues long: Imidazoleglycerol-phosphate dehydratase (195 aa).

This sequence belongs to the imidazoleglycerol-phosphate dehydratase family.

Its subcellular location is the cytoplasm. It carries out the reaction D-erythro-1-(imidazol-4-yl)glycerol 3-phosphate = 3-(imidazol-4-yl)-2-oxopropyl phosphate + H2O. It functions in the pathway amino-acid biosynthesis; L-histidine biosynthesis; L-histidine from 5-phospho-alpha-D-ribose 1-diphosphate: step 6/9. The polypeptide is Imidazoleglycerol-phosphate dehydratase (Jannaschia sp. (strain CCS1)).